The chain runs to 955 residues: Leucine--tRNA ligase (955 aa).

The 'HIGH' region motif lies at 51–61 (PYLNGVLHAGH). A 'KMSKS' region motif is present at residues 647–651 (KLSKS). K650 provides a ligand contact to ATP.

The protein belongs to the class-I aminoacyl-tRNA synthetase family.

It is found in the cytoplasm. It catalyses the reaction tRNA(Leu) + L-leucine + ATP = L-leucyl-tRNA(Leu) + AMP + diphosphate. The polypeptide is Leucine--tRNA ligase (Methanococcus maripaludis (strain C5 / ATCC BAA-1333)).